The following is a 258-amino-acid chain: Malonyl-[acyl-carrier protein] O-methyltransferase (258 aa).

The protein belongs to the methyltransferase superfamily.

It carries out the reaction malonyl-[ACP] + S-adenosyl-L-methionine = malonyl-[ACP] methyl ester + S-adenosyl-L-homocysteine. It functions in the pathway cofactor biosynthesis; biotin biosynthesis. Its function is as follows. Converts the free carboxyl group of a malonyl-thioester to its methyl ester by transfer of a methyl group from S-adenosyl-L-methionine (SAM). It allows to synthesize pimeloyl-ACP via the fatty acid synthetic pathway. The protein is Malonyl-[acyl-carrier protein] O-methyltransferase of Hamiltonella defensa subsp. Acyrthosiphon pisum (strain 5AT).